The chain runs to 576 residues: NADH-quinone oxidoreductase subunit C/D (576 aa).

An NADH dehydrogenase I subunit C region spans residues 1–176 (MAWISLEKAK…NLEGLFNYDR (176 aa)). Residues 200–576 (SQIVLNWGPL…IDPVVGETDR (377 aa)) are NADH dehydrogenase I subunit D.

It in the N-terminal section; belongs to the complex I 30 kDa subunit family. This sequence in the C-terminal section; belongs to the complex I 49 kDa subunit family. As to quaternary structure, NDH-1 is composed of 13 different subunits. Subunits NuoB, CD, E, F, and G constitute the peripheral sector of the complex.

The protein localises to the cell inner membrane. The catalysed reaction is a quinone + NADH + 5 H(+)(in) = a quinol + NAD(+) + 4 H(+)(out). NDH-1 shuttles electrons from NADH, via FMN and iron-sulfur (Fe-S) centers, to quinones in the respiratory chain. The immediate electron acceptor for the enzyme in this species is believed to be ubiquinone. Couples the redox reaction to proton translocation (for every two electrons transferred, four hydrogen ions are translocated across the cytoplasmic membrane), and thus conserves the redox energy in a proton gradient. In Sulfurihydrogenibium sp. (strain YO3AOP1), this protein is NADH-quinone oxidoreductase subunit C/D.